The sequence spans 190 residues: RNA pyrophosphohydrolase (190 aa).

The 144-residue stretch at 6–149 folds into the Nudix hydrolase domain; that stretch reads GYRPNVGIVL…KRGVYARALC (144 aa). A Nudix box motif is present at residues 38–59; the sequence is GGMHSDETPVEAMYRELNEETG.

Belongs to the Nudix hydrolase family. RppH subfamily. It depends on a divalent metal cation as a cofactor.

In terms of biological role, accelerates the degradation of transcripts by removing pyrophosphate from the 5'-end of triphosphorylated RNA, leading to a more labile monophosphorylated state that can stimulate subsequent ribonuclease cleavage. The sequence is that of RNA pyrophosphohydrolase from Xylella fastidiosa (strain 9a5c).